The primary structure comprises 207 residues: Transcriptional regulator GfcR (207 aa).

This sequence belongs to the purine/pyrimidine phosphoribosyltransferase family. GfcR subfamily.

In Methanocella arvoryzae (strain DSM 22066 / NBRC 105507 / MRE50), this protein is Transcriptional regulator GfcR.